Reading from the N-terminus, the 384-residue chain is uncharacterized protein (384 aa).

A run of 10 helical transmembrane segments spans residues 11–31 (LWFI…GISI), 33–53 (WMIG…AWLM), 66–86 (LALG…LSVL), 94–114 (FSVG…GYVL), 153–173 (LVQM…VILI), 197–217 (LAPV…CKAA), 224–244 (APWL…GAAV), 284–304 (IIIV…LSAV), 309–329 (LTGI…IAEM), and 342–362 (FVVA…PPFY).

The protein belongs to the AbrB family.

The protein localises to the cell membrane. This is an uncharacterized protein from Bacillus subtilis (strain 168).